We begin with the raw amino-acid sequence, 190 residues long: Ladderlectin (190 aa).

An N-terminal signal peptide occupies residues 1–18; that stretch reads MAMLTISLLLCAAVALNG. The C-type lectin domain occupies 60-179; sequence GSRCFMFVET…GNSFPSGVLQ (120 aa). An intrachain disulfide couples Cys153 to Cys169.

As to quaternary structure, multimeric. As to expression, expressed in cells of the branchial epithelium, hepatic sinusoids, biliary epithelium, renal interstitium, skin, and sub-mucosal granular layer of the intestine. Highly expressed in caudal kidney. Moderately expressed in liver. Weakly expressed in gill, spleen, cranial kidney and skin. Isoform 1 is highly expressed in intestine. Isoform 2 is weakly expressed in intestine.

Its function is as follows. Lectin that binds sepharose in a calcium-dependent manner. The polypeptide is Ladderlectin (Oncorhynchus mykiss (Rainbow trout)).